We begin with the raw amino-acid sequence, 441 residues long: Methylenetetrahydrofolate--tRNA-(uracil-5-)-methyltransferase TrmFO (441 aa).

10–15 lines the FAD pocket; it reads GAGLAG.

The protein belongs to the MnmG family. TrmFO subfamily. The cofactor is FAD.

It is found in the cytoplasm. It carries out the reaction uridine(54) in tRNA + (6R)-5,10-methylene-5,6,7,8-tetrahydrofolate + NADH + H(+) = 5-methyluridine(54) in tRNA + (6S)-5,6,7,8-tetrahydrofolate + NAD(+). The enzyme catalyses uridine(54) in tRNA + (6R)-5,10-methylene-5,6,7,8-tetrahydrofolate + NADPH + H(+) = 5-methyluridine(54) in tRNA + (6S)-5,6,7,8-tetrahydrofolate + NADP(+). Functionally, catalyzes the folate-dependent formation of 5-methyl-uridine at position 54 (M-5-U54) in all tRNAs. The polypeptide is Methylenetetrahydrofolate--tRNA-(uracil-5-)-methyltransferase TrmFO (Desulforamulus reducens (strain ATCC BAA-1160 / DSM 100696 / MI-1) (Desulfotomaculum reducens)).